Consider the following 1190-residue polypeptide: MPAPEQGSLVEEGQPQTHQEAVSTGPGMEPETTATTILASVKEQELQFQRLTRELEVERQIVASQLERCRLGAESPSIASTSSTEKSFPWRSTDVPNPGVSKPRVSDTIHPNNYLIRTEPEQGTLYSPEQTSLHESEGSLGNSRSSTQMNSYSDSGYQEAGSFHNSQTVNKADSRQHPFTGSTSNHVVRTSRAEGQTLVQPSVANRAMRRVSSVPSRAQSPSYVTSTGVSPSRGSLRTSLGSGFGSPSVTDSRPLNPSAYSSSTLPAQRAASPYSQRPASPTAVRRVGSVTSRQTSNPNGPVPQYQTTTRVGSPLTLTDAQTRVASPSQGQVGSSSPKRSGMTAVPQHLGPSLQRTVHDMDQFGQQQYDIYERMVPPRPDSLTGLRSSYASQHSQLGQELRSAVSPDLHITPIYEGRTYYSPVYRSPNHGTVELQGSQTALYRTGSVGIGNLQRTSSQRSTLTYQRNNYALNTAATYAEPYRPVQYRVQECSYNRLQHTGPADDGATRSPSIDSIQKDPREFAWRDPELPEVIHMLQHQFPSVQANAAAYLQHLCFGDNKVKMEVYRLGGIKHLVDLLDHRVLEVQKNACGALRNLVFGKSTDENKIAMKNVGGIPALLRLLRKSIDAEVRELVTGVLWNLSSCDAVKMTIIRDALSTLTNTVIVPHSGWNNSSFDDDHKIKFQTSLVLRNTTGCLRNLSSAGEEARKQMRSCEGLVDSLLYVIHTCVNTSDYDSKTVENCVCTLRNLSYRLELEVPQARLLGLNELDDLLGKESPSKDSEPSCWGKKKKKKKRTPQEDQWDGVGPIPGLSKSPKGVEMLWHPSVVKPYLTLLAESSNPATLEGSAGSLQNLSAGNWKFAAYIRAAVRKEKGLPILVELLRMDNDRVVSSVATALRNMALDVRNKELIGKYAMRDLVNRLPGGNGPSILSDETVAAICCALHEVTSKNMENAKALADSGGIEKLVNITKGRGDRSSLKVVKAAAQVLNTLWQYRDLRSIYKKDGWNQNHFITPVSTLERDRFKSHPSLSTTNQQMSPIIQSVGSTSSSPALLGIREPRSEYDRTQPPMQYYNSQGDTTHKGLYPGSSKPSPIYISSYSSPAREQNRRLQHQQLYYQDDSTRKTLDAYRLYLQSPRSYEDPYCDDRVHFPASTDYSTQYGLKSTTNYVDFYSTKRPSYRAEQYPGSPDSWV.

The segment at 1-32 (MPAPEQGSLVEEGQPQTHQEAVSTGPGMEPET) is disordered. Residues 36 to 63 (TILASVKEQELQFQRLTRELEVERQIVA) are a coiled coil. The tract at residues 73–347 (AESPSIASTS…KRSGMTAVPQ (275 aa)) is disordered. S75 is subject to Phosphoserine. Positions 77–86 (SIASTSSTEK) are enriched in polar residues. T84 carries the phosphothreonine modification. Phosphoserine is present on residues S106, S132, S136, and S139. Composition is skewed to polar residues over residues 138–156 (GSLG…SDSG), 163–203 (FHNS…QPSV), and 213–229 (SVPS…STGV). Phosphoserine occurs at positions 220, 230, and 235. The segment covering 230-241 (SPSRGSLRTSLG) has biased composition (low complexity). Positions 247–266 (PSVTDSRPLNPSAYSSSTLP) are enriched in polar residues. Omega-N-methylarginine is present on residues R253 and R269. Residues S272, S280, S313, S326, and S336 each carry the phosphoserine modification. Polar residues predominate over residues 289 to 323 (SVTSRQTSNPNGPVPQYQTTTRVGSPLTLTDAQTR). A compositionally biased stretch (low complexity) spans 324-337 (VASPSQGQVGSSSP). Y371 is subject to Phosphotyrosine. Phosphoserine is present on residues S391, S402, and S405. Phosphothreonine is present on T411. Y414 carries the phosphotyrosine modification. Residues S421, S426, and S437 each carry the phosphoserine modification. Residue Y477 is modified to Phosphotyrosine. Residues S509, S511, and S514 each carry the phosphoserine modification. 3 ARM repeats span residues 517–556 (KDPR…HLCF), 559–598 (NKVK…NLVF), and 603–643 (DENK…NLSS). The span at 772 to 781 (GKESPSKDSE) shows a compositional bias: basic and acidic residues. Residues 772-809 (GKESPSKDSEPSCWGKKKKKKKRTPQEDQWDGVGPIPG) are disordered. Residue S775 is modified to Phosphoserine. The stretch at 861–900 (AYIRAAVRKEKGLPILVELLRMDNDRVVSSVATALRNMAL) is one ARM 4 repeat. Phosphothreonine occurs at positions 1012 and 1016. Phosphoserine is present on residues S1044, S1090, S1099, and S1133.

This sequence belongs to the beta-catenin family. Interacts (via the C-terminus) with FRMPD2 (via the PDZ 2 domain). Interacts with PDZD2. Interacts with RHOA; the interaction is detected at the midbody. Interacts with ECT2; the interaction is detected at the midbody. Interacts with CCDC85B.

It localises to the cell junction. Its subcellular location is the desmosome. The protein localises to the cytoplasm. It is found in the cytoskeleton. The protein resides in the spindle. It localises to the spindle pole. Its subcellular location is the midbody. The protein localises to the cell membrane. Its function is as follows. Plays a role as a regulator of Rho activity during cytokinesis. May play a role in junctional plaques. This is Plakophilin-4 (Pkp4) from Mus musculus (Mouse).